A 125-amino-acid chain; its full sequence is Small ribosomal subunit protein uS12 (125 aa).

Position 89 is a 3-methylthioaspartic acid (aspartate 89). The interval 101-125 is disordered; sequence SLDTAGVKDRKQSRSKYGAKRPKKA. Residues 113-125 show a composition bias toward basic residues; that stretch reads SRSKYGAKRPKKA.

The protein belongs to the universal ribosomal protein uS12 family. Part of the 30S ribosomal subunit. Contacts proteins S8 and S17. May interact with IF1 in the 30S initiation complex.

Functionally, with S4 and S5 plays an important role in translational accuracy. In terms of biological role, interacts with and stabilizes bases of the 16S rRNA that are involved in tRNA selection in the A site and with the mRNA backbone. Located at the interface of the 30S and 50S subunits, it traverses the body of the 30S subunit contacting proteins on the other side and probably holding the rRNA structure together. The combined cluster of proteins S8, S12 and S17 appears to hold together the shoulder and platform of the 30S subunit. The protein is Small ribosomal subunit protein uS12 of Thiobacillus denitrificans (strain ATCC 25259 / T1).